The chain runs to 139 residues: Mitochondrial intermembrane space import and assembly protein 40 (139 aa).

Intrachain disulfides connect Cys-53/Cys-55, Cys-64/Cys-97, and Cys-74/Cys-87. One can recognise a CHCH domain in the interval 61–105 (SGPCGEQFKSAFSCFHYSTEDIKGSDCIDQFRAMQECMQKYPDLY). Short sequence motifs (cx9C motif) lie at residues 64-74 (CGEQFKSAFSC) and 87-97 (CIDQFRAMQEC). A disordered region spans residues 102–139 (PDLYPQDEEEEEEAKPVEPVEETADTKVSAAKEQGTSS). Acidic residues predominate over residues 106 to 124 (PQDEEEEEEAKPVEPVEET).

Monomer. Can form homooligomers. Interacts with GFER and forms transient disulfide bonds with GFER. Interacts with MICU1. Interacts with COX19 forming transient intermolecular disulfide bridges. Interacts with COA7 through transient intermolecular disulfide bonds. Interacts with AIFM1; the interaction increases in presence of NADH. Interacts with NDUFB10. Post-translationally, forms intrachain disulfide bridges, but exists in different redox states. Widely expressed. Present at high level in liver and kidney, followed by lung, brain, heart and spleen (at protein level).

It is found in the mitochondrion intermembrane space. Its function is as follows. Central component of a redox-sensitive mitochondrial intermembrane space import machinery which is required for the biogenesis of respiratory chain complexes. Functions as chaperone and catalyzes the formation of disulfide bonds in substrate proteins, such as COX17, COX19, MICU1 and COA7. Required for the import and folding of small cysteine-containing proteins (small Tim) in the mitochondrial intermembrane space (IMS). Required for the import of COA7 in the IMS. Precursor proteins to be imported into the IMS are translocated in their reduced form into the mitochondria. The oxidized form of CHCHD4/MIA40 forms a transient intermolecular disulfide bridge with the reduced precursor protein, resulting in oxidation of the precursor protein that now contains an intramolecular disulfide bond and is able to undergo folding in the IMS. Reduced CHCHD4/MIA40 is then reoxidized by GFER/ERV1 via a disulfide relay system. Mediates formation of disulfide bond in MICU1 in the IMS, promoting formation of the MICU1-MICU2 heterodimer that regulates mitochondrial calcium uptake. In Mus musculus (Mouse), this protein is Mitochondrial intermembrane space import and assembly protein 40 (Chchd4).